An 87-amino-acid chain; its full sequence is MAADDHIEMEGVVEEALPGTLFRVVLENGHEVLAHLCGKMRKFRIRVLPGDKVTVHISPYDLTKGRIARRTTTPSGGPRPARSGNRR.

One can recognise an S1-like domain in the interval 1–72; sequence MAADDHIEME…TKGRIARRTT (72 aa). A disordered region spans residues 65-87; the sequence is GRIARRTTTPSGGPRPARSGNRR.

The protein belongs to the IF-1 family. As to quaternary structure, component of the 30S ribosomal translation pre-initiation complex which assembles on the 30S ribosome in the order IF-2 and IF-3, IF-1 and N-formylmethionyl-tRNA(fMet); mRNA recruitment can occur at any time during PIC assembly.

It localises to the cytoplasm. One of the essential components for the initiation of protein synthesis. Stabilizes the binding of IF-2 and IF-3 on the 30S subunit to which N-formylmethionyl-tRNA(fMet) subsequently binds. Helps modulate mRNA selection, yielding the 30S pre-initiation complex (PIC). Upon addition of the 50S ribosomal subunit IF-1, IF-2 and IF-3 are released leaving the mature 70S translation initiation complex. This is Translation initiation factor IF-1 2 from Nitratidesulfovibrio vulgaris (strain ATCC 29579 / DSM 644 / CCUG 34227 / NCIMB 8303 / VKM B-1760 / Hildenborough) (Desulfovibrio vulgaris).